Reading from the N-terminus, the 325-residue chain is Diacylglycerol acyltransferase/mycolyltransferase Ag85B (325 aa).

The first 40 residues, 1–40 (MTDVSRKIRAWGRRLMIGTAAAVVLPGLVGLAGGAATAGA), serve as a signal peptide directing secretion. Residue 82–83 (LR) coordinates substrate. Positions 98–108 (FEWYYQSGLSI) are fibronectin-binding. C127 and C132 are disulfide-bonded. Substrate is bound by residues S166 and D194. S166 acts as the Nucleophile in catalysis. The active site involves E270. Substrate-binding positions include 272–275 (FVRS), K279, and 302–304 (HSW). The active site involves H302.

Belongs to the mycobacterial A85 antigen family.

The protein localises to the secreted. It carries out the reaction 2 alpha,alpha'-trehalose 6-mycolate = alpha,alpha'-trehalose 6,6'-bismycolate + alpha,alpha-trehalose. It catalyses the reaction an acyl-CoA + a 1,2-diacyl-sn-glycerol = a triacyl-sn-glycerol + CoA. Functionally, the antigen 85 proteins (FbpA, FbpB, FbpC) are responsible for the high affinity of mycobacteria for fibronectin, a large adhesive glycoprotein, which facilitates the attachment of M.tuberculosis to murine alveolar macrophages (AMs). They also help to maintain the integrity of the cell wall by catalyzing the transfer of mycolic acids to cell wall arabinogalactan and through the synthesis of alpha,alpha-trehalose dimycolate (TDM, cord factor). They catalyze the transfer of a mycoloyl residue from one molecule of alpha,alpha-trehalose monomycolate (TMM) to another TMM, leading to the formation of TDM. This is Diacylglycerol acyltransferase/mycolyltransferase Ag85B (fbpB) from Mycobacterium tuberculosis (strain ATCC 25177 / H37Ra).